We begin with the raw amino-acid sequence, 157 residues long: Protein TIFY 8 (157 aa).

The region spanning 33-68 is the Tify domain; that stretch reads VPGTTEQLTIFYSGSMVKFDNVPREKIRYACRLRRL. The interval 126–147 is disordered; it reads SIGAQRTGTPPSRRRIHARGKS. Residues 137-147 show a composition bias toward basic residues; sequence SRRRIHARGKS.

The protein belongs to the TIFY/JAZ family. Ubiquitinated. Targeted for degradation by the SCF(COI1) E3 ubiquitin ligase-proteasome pathway during jasmonate signaling.

Repressor of jasmonate responses. In Oryza sativa subsp. japonica (Rice), this protein is Protein TIFY 8.